We begin with the raw amino-acid sequence, 193 residues long: dCTP deaminase (193 aa).

Residues 110–115, D128, 136–138, Y171, K178, and Q182 contribute to the dCTP site; these read RSSLAR and VLE. The Proton donor/acceptor role is filled by E138. The segment at 169-193 is disordered; it reads RPYNRREDAKYRNQQGAVASRIDKD.

Belongs to the dCTP deaminase family. In terms of assembly, homotrimer.

The catalysed reaction is dCTP + H2O + H(+) = dUTP + NH4(+). It functions in the pathway pyrimidine metabolism; dUMP biosynthesis; dUMP from dCTP (dUTP route): step 1/2. Its function is as follows. Catalyzes the deamination of dCTP to dUTP. The protein is dCTP deaminase of Escherichia coli O8 (strain IAI1).